A 457-amino-acid chain; its full sequence is Siroheme synthase (457 aa).

Residues methionine 1 to threonine 204 form a precorrin-2 dehydrogenase /sirohydrochlorin ferrochelatase region. NAD(+) contacts are provided by residues aspartate 22–valine 23 and leucine 43–alanine 44. A Phosphoserine modification is found at serine 128. The tract at residues glycine 216–histidine 457 is uroporphyrinogen-III C-methyltransferase. Proline 225 is an S-adenosyl-L-methionine binding site. The active-site Proton acceptor is aspartate 248. Catalysis depends on lysine 270, which acts as the Proton donor. S-adenosyl-L-methionine-binding positions include glycine 301–aspartate 303, isoleucine 306, threonine 331–alanine 332, methionine 382, and glycine 411.

It in the N-terminal section; belongs to the precorrin-2 dehydrogenase / sirohydrochlorin ferrochelatase family. In the C-terminal section; belongs to the precorrin methyltransferase family.

It carries out the reaction uroporphyrinogen III + 2 S-adenosyl-L-methionine = precorrin-2 + 2 S-adenosyl-L-homocysteine + H(+). It catalyses the reaction precorrin-2 + NAD(+) = sirohydrochlorin + NADH + 2 H(+). The catalysed reaction is siroheme + 2 H(+) = sirohydrochlorin + Fe(2+). It functions in the pathway cofactor biosynthesis; adenosylcobalamin biosynthesis; precorrin-2 from uroporphyrinogen III: step 1/1. Its pathway is cofactor biosynthesis; adenosylcobalamin biosynthesis; sirohydrochlorin from precorrin-2: step 1/1. It participates in porphyrin-containing compound metabolism; siroheme biosynthesis; precorrin-2 from uroporphyrinogen III: step 1/1. The protein operates within porphyrin-containing compound metabolism; siroheme biosynthesis; siroheme from sirohydrochlorin: step 1/1. It functions in the pathway porphyrin-containing compound metabolism; siroheme biosynthesis; sirohydrochlorin from precorrin-2: step 1/1. Multifunctional enzyme that catalyzes the SAM-dependent methylations of uroporphyrinogen III at position C-2 and C-7 to form precorrin-2 via precorrin-1. Then it catalyzes the NAD-dependent ring dehydrogenation of precorrin-2 to yield sirohydrochlorin. Finally, it catalyzes the ferrochelation of sirohydrochlorin to yield siroheme. The protein is Siroheme synthase of Escherichia coli O6:K15:H31 (strain 536 / UPEC).